We begin with the raw amino-acid sequence, 121 residues long: Small ribosomal subunit protein bS21m (121 aa).

The N-terminal 14 residues, 1–14, are a transit peptide targeting the mitochondrion; the sequence is MNSSYFPGVLGVRW.

It belongs to the bacterial ribosomal protein bS21 family. As to quaternary structure, component of the mitochondrial small ribosomal subunit (mt-SSU). Mature yeast 74S mitochondrial ribosomes consist of a small (37S) and a large (54S) subunit. The 37S small subunit contains a 15S ribosomal RNA (15S mt-rRNA) and at least 32 different proteins. The 54S large subunit contains a 21S rRNA (21S mt-rRNA) and at least 45 different proteins.

The protein localises to the mitochondrion. Component of the mitochondrial ribosome (mitoribosome), a dedicated translation machinery responsible for the synthesis of mitochondrial genome-encoded proteins, including at least some of the essential transmembrane subunits of the mitochondrial respiratory chain. The mitoribosomes are attached to the mitochondrial inner membrane and translation products are cotranslationally integrated into the membrane. The polypeptide is Small ribosomal subunit protein bS21m (mrp21) (Schizosaccharomyces pombe (strain 972 / ATCC 24843) (Fission yeast)).